The following is a 356-amino-acid chain: Inositol phosphoceramide mannosyltransferase 3 (356 aa).

A helical membrane pass occupies residues 4–24 (ILFYFFFFLTLILSATVYLFG). 2 N-linked (GlcNAc...) asparagine glycosylation sites follow: asparagine 52 and asparagine 146. A run of 2 helical transmembrane segments spans residues 197 to 217 (FPYL…IWSA) and 269 to 289 (WAIF…FIFG). Phosphoserine is present on residues serine 307, serine 353, and serine 355.

Belongs to the glycosyltransferase 32 family.

Its subcellular location is the endoplasmic reticulum membrane. It is found in the golgi apparatus. It localises to the cis-Golgi network membrane. The protein resides in the trans-Golgi network membrane. Functionally, with imt1 and imt2, is required for the synthesis of mannosylinositol phosphoceramide (MIPC). Catalyzes the addition of mannosyl to inositol phosphoceramide (IPC). MIPC is essential for cell morphology, cell-surface distribution of ergosterol, localization for plasma-membrane transporters, and lipid-raft-mediated endocytosis of plasma membrane proteins to the vacuole. The protein is Inositol phosphoceramide mannosyltransferase 3 of Schizosaccharomyces pombe (strain 972 / ATCC 24843) (Fission yeast).